A 155-amino-acid polypeptide reads, in one-letter code: MSRRGTTEEKTAKSDPIYRNRLVNMLVNRILKHGKKSLAYQIIYRAVKKIQQKTETNPLSVLRQAIRGVTPDIAVKARRVGGSTHQVPIEIGSTQGKALAIRWLLWASRKRPGRNMAFKLSSELVDAAKGSGDAIRKKEETHRMAEANRAFAHFR.

The protein belongs to the universal ribosomal protein uS7 family. Part of the 30S ribosomal subunit.

The protein localises to the plastid. It is found in the chloroplast. Its function is as follows. One of the primary rRNA binding proteins, it binds directly to 16S rRNA where it nucleates assembly of the head domain of the 30S subunit. In Saururus cernuus (Lizard's tail), this protein is Small ribosomal subunit protein uS7c (rps7).